The chain runs to 139 residues: Small capsomere-interacting protein (139 aa).

Positions 100-120 (SLTTPSLSSTPTSLTSMPGLS) are enriched in low complexity. The interval 100 to 139 (SLTTPSLSSTPTSLTSMPGLSISGPSTTDTIDSKKKPKAK) is disordered.

This sequence belongs to the herpesviridae small capsomere-interacting protein family. Interacts with the major capsid protein/MCP.

The protein localises to the virion. Its subcellular location is the host nucleus. In terms of biological role, participates in the assembly of the infectious particles by decorating the outer surface of the capsid shell and thus forming a layer between the capsid and the tegument. Complexes composed of the major capsid protein and small capsomere-interacting protein/SCP assemble together in the host cytoplasm and are translocated to the nucleus, where they accumulate and participate in capsid assembly. The sequence is that of Small capsomere-interacting protein from Saimiri sciureus (Common squirrel monkey).